The following is a 91-amino-acid chain: Hepcidin-1 (91 aa).

Positions 1–24 are cleaved as a signal peptide; that stretch reads MKLSNVFLAAVVILTCVCVFQITA. Residues 25 to 64 constitute a propeptide that is removed on maturation; sequence VPFIQQVQDEHHVESEELQENQHLTEAEHRQTDPLVLFRT. Intrachain disulfides connect Cys-73-Cys-89, Cys-76-Cys-79, Cys-77-Cys-85, and Cys-80-Cys-88.

The protein belongs to the hepcidin family.

The protein resides in the secreted. Its function is as follows. Seems to act as a signaling molecule involved in the maintenance of iron homeostasis. Seems to be required in conjunction with HFE to regulate both intestinal iron absorption and iron storage in macrophages. May also have antimicrobial activity. The polypeptide is Hepcidin-1 (hamp1) (Danio rerio (Zebrafish)).